Here is a 299-residue protein sequence, read N- to C-terminus: 5-azacytidine resistance protein azr1 (299 aa).

The PPM-type phosphatase domain occupies 35-293 (KSHFPSPATL…DDTTITCLLI (259 aa)).

Functionally, confers azacytidine resistance in high copy. This is 5-azacytidine resistance protein azr1 (azr1) from Schizosaccharomyces pombe (strain 972 / ATCC 24843) (Fission yeast).